A 220-amino-acid chain; its full sequence is MANDQVILLDYWPSMFGMRTKMALAEKGVKYEYKETDPWVKTPLLIEMNPIHKKIPVLIHNGKPICESLIQLEYIDEVWSDASPILPSDPYQKSRARFWAEFIDKKFYDPSWKVWATMGEEHAAVKKELLEHFKTLETELGDKPYYGGEVFGYLDIALMGYYSWFKAMEKFGEFSIETEFPILTTWTKRCLERESVVKALADSDRIIEYVYVLRKKFGAA.

In terms of domain architecture, GST N-terminal spans 4–83 (DQVILLDYWP…YIDEVWSDAS (80 aa)). Glutathione-binding positions include 14–15 (SM), 40–41 (VK), 54–55 (KI), and 67–68 (ES). Residues 89–210 (DPYQKSRARF…ADSDRIIEYV (122 aa)) form the GST C-terminal domain.

Belongs to the GST superfamily. Tau family.

It is found in the cytoplasm. Its subcellular location is the cytosol. The enzyme catalyses RX + glutathione = an S-substituted glutathione + a halide anion + H(+). Functionally, in vitro, possesses glutathione S-transferase activity toward 1-chloro-2,4-dinitrobenzene (CDNB). May be involved in the conjugation of reduced glutathione to a wide number of exogenous and endogenous hydrophobic electrophiles and have a detoxification role against certain herbicides. This chain is Glutathione S-transferase U26 (GSTU26), found in Arabidopsis thaliana (Mouse-ear cress).